The chain runs to 432 residues: Probable protein phosphatase 2C 33 (432 aa).

Residues 27-298 enclose the PPM-type phosphatase domain; it reads GGGSERPLVR…DDTTCVVVDI (272 aa). The Mn(2+) site is built by aspartate 74, glycine 75, aspartate 250, and aspartate 289.

The protein belongs to the PP2C family. Requires Mg(2+) as cofactor. It depends on Mn(2+) as a cofactor.

It carries out the reaction O-phospho-L-seryl-[protein] + H2O = L-seryl-[protein] + phosphate. It catalyses the reaction O-phospho-L-threonyl-[protein] + H2O = L-threonyl-[protein] + phosphate. This chain is Probable protein phosphatase 2C 33, found in Oryza sativa subsp. japonica (Rice).